Reading from the N-terminus, the 431-residue chain is Serine hydroxymethyltransferase (431 aa).

(6S)-5,6,7,8-tetrahydrofolate-binding positions include Leu128 and 132–134 (GHL). Position 237 is an N6-(pyridoxal phosphate)lysine (Lys237).

Belongs to the SHMT family. Homodimer. Pyridoxal 5'-phosphate serves as cofactor.

The protein localises to the cytoplasm. It catalyses the reaction (6R)-5,10-methylene-5,6,7,8-tetrahydrofolate + glycine + H2O = (6S)-5,6,7,8-tetrahydrofolate + L-serine. It participates in one-carbon metabolism; tetrahydrofolate interconversion. Its pathway is amino-acid biosynthesis; glycine biosynthesis; glycine from L-serine: step 1/1. In terms of biological role, catalyzes the reversible interconversion of serine and glycine with tetrahydrofolate (THF) serving as the one-carbon carrier. This reaction serves as the major source of one-carbon groups required for the biosynthesis of purines, thymidylate, methionine, and other important biomolecules. Also exhibits THF-independent aldolase activity toward beta-hydroxyamino acids, producing glycine and aldehydes, via a retro-aldol mechanism. This is Serine hydroxymethyltransferase from Ruegeria sp. (strain TM1040) (Silicibacter sp.).